The primary structure comprises 270 residues: MLTDLPLDLESEILSRVPATSLQRLKTTCKRWYALFRDPRFVKKNLGKAATHVIFDNRSGYSMTDINSLIHSINLRGIQNSFDPSIGVDVKLNVLKDPRHDKISHIISHCDGLLLCKTEDYGRLVVWNPCTGQIKWIQANNMLMDVYVLGYVNNNKSCNSYKILNFGILPLNSSHDNKSKIYEFNSDSWRILDHVSPGYFAISKAMTLKGNAYWFASDWSGTKTRTRIYFAKEGIQVHQEIAQKPKKCGPFLVSYVPSLVQIQSGNKQSS.

An F-box domain is found at 1-45; it reads MLTDLPLDLESEILSRVPATSLQRLKTTCKRWYALFRDPRFVKKN.

The sequence is that of Putative F-box protein At3g24700 from Arabidopsis thaliana (Mouse-ear cress).